We begin with the raw amino-acid sequence, 526 residues long: Light-independent protochlorophyllide reductase subunit B (526 aa).

Position 36 (D36) interacts with [4Fe-4S] cluster. The active-site Proton donor is the D290. Substrate is bound at residue 425–426 (GL).

Belongs to the ChlB/BchB/BchZ family. As to quaternary structure, protochlorophyllide reductase is composed of three subunits; ChlL, ChlN and ChlB. Forms a heterotetramer of two ChlB and two ChlN subunits. [4Fe-4S] cluster is required as a cofactor.

The catalysed reaction is chlorophyllide a + oxidized 2[4Fe-4S]-[ferredoxin] + 2 ADP + 2 phosphate = protochlorophyllide a + reduced 2[4Fe-4S]-[ferredoxin] + 2 ATP + 2 H2O. Its pathway is porphyrin-containing compound metabolism; chlorophyll biosynthesis (light-independent). Component of the dark-operative protochlorophyllide reductase (DPOR) that uses Mg-ATP and reduced ferredoxin to reduce ring D of protochlorophyllide (Pchlide) to form chlorophyllide a (Chlide). This reaction is light-independent. The NB-protein (ChlN-ChlB) is the catalytic component of the complex. In Prochlorococcus marinus (strain MIT 9515), this protein is Light-independent protochlorophyllide reductase subunit B.